A 1044-amino-acid chain; its full sequence is Outer dynein arm-docking complex subunit 2 (1044 aa).

Basic and acidic residues-rich tracts occupy residues 317–338 (IKFS…EVAI) and 379–401 (SKDR…EKSR). Disordered regions lie at residues 317–409 (IKFS…PGRA) and 423–446 (ISDS…ANAD). HEAT repeat units lie at residues 448 to 485 (PSEY…AQET), 487 to 527 (QLAI…NPQI), 530 to 568 (NIVD…FRRA), 627 to 665 (AIRK…EENY), and 668 to 706 (AIKA…DEET). ARM repeat units follow at residues 484 to 523 (ETCQ…EISH), 525 to 564 (PQIR…NVAK), 535 to 577 (GGLP…RHGG), 622 to 661 (YANK…ECAS), 663 to 702 (ENYR…QCAE), 746 to 785 (KENV…ECCQ), 828 to 867 (PESM…PCIQ), 871 to 910 (DAGE…NIAK), 912 to 951 (QENL…RCCM), 953 to 992 (GRNR…QLSE), and 1004 to 1031 (GAVK…ISNI). HEAT repeat units lie at residues 831–870 (MMII…QNAK), 874–914 (EMVR…DQEN), 916–955 (AVIT…WGRN), 958–996 (AFGE…DADN), and 999–1037 (TMHE…LALA).

Component of the outer dynein arm-docking complex along with ODAD1, ODAD3, ODAD4 and CLXN. Interacts with CFAP61. In terms of tissue distribution, expressed in trachea multiciliated cells.

The protein localises to the cytoplasm. It localises to the cytoskeleton. It is found in the cilium axoneme. Its subcellular location is the cilium basal body. Component of the outer dynein arm-docking complex (ODA-DC) that mediates outer dynein arms (ODA) binding onto the doublet microtubule. Involved in mediating assembly of both ODAs and their axonemal docking complex onto ciliary microtubules. The protein is Outer dynein arm-docking complex subunit 2 (ODAD2) of Bos taurus (Bovine).